The following is a 431-amino-acid chain: Trigger factor (431 aa).

Residues 160 to 245 (EDRVTIDFSG…LKKVEVMVLP (86 aa)) form the PPIase FKBP-type domain.

This sequence belongs to the FKBP-type PPIase family. Tig subfamily.

The protein localises to the cytoplasm. It catalyses the reaction [protein]-peptidylproline (omega=180) = [protein]-peptidylproline (omega=0). Functionally, involved in protein export. Acts as a chaperone by maintaining the newly synthesized protein in an open conformation. Functions as a peptidyl-prolyl cis-trans isomerase. The polypeptide is Trigger factor (Actinobacillus succinogenes (strain ATCC 55618 / DSM 22257 / CCUG 43843 / 130Z)).